The following is a 554-amino-acid chain: DnaJ homolog subfamily C member 1 (554 aa).

Positions 1–47 (MTAPCSQPAQLPGRRQLGLVPFPPPPPRTPLLWLLLLLLAAVAPARG) are cleaved as a signal peptide. The Lumenal portion of the chain corresponds to 48 to 153 (WESGDLELFD…RRVRKMSNAE (106 aa)). Residues 65–129 (NFYQFLGVQQ…ERRQRYDDIL (65 aa)) form the J domain. A helical transmembrane segment spans residues 154–174 (LALLLFIILTVGHYAVVWSIY). The Cytoplasmic portion of the chain corresponds to 175–554 (LEKQLDELLS…LVQKKKQAKS (380 aa)). An SANT 1 domain is found at 325–379 (KQAPEWTEEDLSQLTRSMVKFPGGTPGRWEKIAHELGRSVTDVTTKAKQLKDSVT). A Phosphoserine modification is found at Ser-381. The segment covering 392–405 (STVQNSRPIKTATT) has biased composition (polar residues). A disordered region spans residues 392–500 (STVQNSRPIK…RSAEEPWTQN (109 aa)). Positions 421 to 432 (AAEEEQEGDSGE) are enriched in acidic residues. A Phosphoserine modification is found at Ser-430. Residues 455–472 (AKPEPEEKSRAKRQKDFD) are compositionally biased toward basic and acidic residues. The segment covering 473 to 482 (IAEQNESSDE) has biased composition (acidic residues). Ser-479, Ser-480, Ser-484, and Ser-492 each carry phosphoserine. The segment covering 483-494 (ESLRKERARSAE) has biased composition (basic and acidic residues). Residues 492–547 (SAEEPWTQNQQKLLELALQQYPRGSSDRWDKIARCVPSKSKEDCIARYKLLVELVQ) form the SANT 2 domain.

In terms of assembly, interacts (via J domain) with HSPA5. Interacts (via cytosolic domain) with ribosomes. Interacts (via SANT 2 domain) with SERPINA3; the interaction delays the formation of the covalent inhibitory complex SERPINA3-chymotrypsin, but does not alter the catalytic activity of SERPINA3. Interacts (via SANT 2 domain) with ITIH4 (via C-terminus); the interaction protects ITIH4 against in vitro cleavage by kallikrein.

It is found in the endoplasmic reticulum membrane. Its subcellular location is the nucleus membrane. The protein localises to the microsome membrane. In terms of biological role, may modulate protein synthesis. This chain is DnaJ homolog subfamily C member 1 (DNAJC1), found in Homo sapiens (Human).